Consider the following 341-residue polypeptide: Cytochrome c biogenesis protein CcsA (341 aa).

8 consecutive transmembrane segments (helical) span residues 16–36 (LILL…GMSI), 37–57 (LPTL…TLLG), 68–88 (LSNL…VHLI), 97–117 (LVGV…ALSL), 142–162 (VMML…AFLI), 249–269 (IIGL…VWAN), 276–296 (WSWD…AAYL), and 310–330 (AILA…VNLL).

It belongs to the CcmF/CycK/Ccl1/NrfE/CcsA family. In terms of assembly, may interact with ccs1.

The protein localises to the cellular thylakoid membrane. Functionally, required during biogenesis of c-type cytochromes (cytochrome c6 and cytochrome f) at the step of heme attachment. The chain is Cytochrome c biogenesis protein CcsA from Rippkaea orientalis (strain PCC 8801 / RF-1) (Cyanothece sp. (strain PCC 8801)).